Here is a 372-residue protein sequence, read N- to C-terminus: MKYDLIIIGSGSVGAAAGYYATRAGLNVLMTDAHMPPHQHGSHHGDTRLIRHAYGEGEKYVPLVLRAQTLWDELSRHNEEDPIFVRSGVINLGPADSTFLANVAHSAEQWQLNVEKLDAQGIMARWPEIRVPDNYIGLFETDSGFLRSELAIKTWIQLAKEAGCAQLFNCPVTAIRHDDDGVTIETADGEYQAKKAIVCAGTWVKDLLPELPVQPVRKVFAWYQADGRYSVKNKFPAFTGELPNGDQYYGFPAENDALKIGKHNGGQVIHSADERVPFAEVASDGSEAFPFLRNVLPGIGCCLYGAACTYDNSPDEDFIIDTLPGHDNTLLITGLSGHGFKFASVLGEIAADFAQDKKSDFDLTPFRLSRFQ.

4–34 is a binding site for FAD; it reads DLIIIGSGSVGAAAGYYATRAGLNVLMTDAH. The residue at position 308 (Cys308) is an S-8alpha-FAD cysteine.

It belongs to the MSOX/MTOX family. MTOX subfamily. Monomer. FAD is required as a cofactor.

The catalysed reaction is N(alpha)-methyl-L-tryptophan + O2 + H2O = L-tryptophan + formaldehyde + H2O2. Catalyzes the oxidative demethylation of N-methyl-L-tryptophan. This chain is N-methyl-L-tryptophan oxidase, found in Escherichia coli (strain K12 / DH10B).